Here is a 252-residue protein sequence, read N- to C-terminus: Imidazole glycerol phosphate synthase subunit HisF (252 aa).

Catalysis depends on residues Asp11 and Asp130.

Belongs to the HisA/HisF family. As to quaternary structure, heterodimer of HisH and HisF.

It localises to the cytoplasm. It carries out the reaction 5-[(5-phospho-1-deoxy-D-ribulos-1-ylimino)methylamino]-1-(5-phospho-beta-D-ribosyl)imidazole-4-carboxamide + L-glutamine = D-erythro-1-(imidazol-4-yl)glycerol 3-phosphate + 5-amino-1-(5-phospho-beta-D-ribosyl)imidazole-4-carboxamide + L-glutamate + H(+). It participates in amino-acid biosynthesis; L-histidine biosynthesis; L-histidine from 5-phospho-alpha-D-ribose 1-diphosphate: step 5/9. Functionally, IGPS catalyzes the conversion of PRFAR and glutamine to IGP, AICAR and glutamate. The HisF subunit catalyzes the cyclization activity that produces IGP and AICAR from PRFAR using the ammonia provided by the HisH subunit. In Staphylococcus aureus (strain bovine RF122 / ET3-1), this protein is Imidazole glycerol phosphate synthase subunit HisF.